We begin with the raw amino-acid sequence, 615 residues long: Medium-chain acyl-CoA ligase ACSF2, mitochondrial (615 aa).

A mitochondrion-targeting transit peptide spans 1-41 (MAVYVGMLRLGRLCAGSSGVLGARVALSRSWQEARLQGVRF). Position 179 is an N6-acetyllysine (K179). K182 carries the post-translational modification N6-acetyllysine; alternate. K182 carries the post-translational modification N6-succinyllysine; alternate. 263-271 (TSGTTGSPK) contacts ATP. N6-acetyllysine is present on residues K340 and K398. K478 is subject to N6-succinyllysine. Positions 493 and 508 each coordinate ATP. Position 510 is an N6-acetyllysine (K510). N6-acetyllysine; alternate occurs at positions 544 and 570. K544 and K570 each carry N6-succinyllysine; alternate. K599 is a binding site for ATP. K599 bears the N6-succinyllysine mark.

This sequence belongs to the ATP-dependent AMP-binding enzyme family.

The protein localises to the mitochondrion. It catalyses the reaction a medium-chain fatty acid + ATP + CoA = a medium-chain fatty acyl-CoA + AMP + diphosphate. It carries out the reaction octanoate + ATP + CoA = octanoyl-CoA + AMP + diphosphate. Its function is as follows. Acyl-CoA synthases catalyze the initial reaction in fatty acid metabolism, by forming a thioester with CoA. Has some preference toward medium-chain substrates. Plays a role in adipocyte differentiation. This chain is Medium-chain acyl-CoA ligase ACSF2, mitochondrial, found in Pongo abelii (Sumatran orangutan).